A 228-amino-acid polypeptide reads, in one-letter code: Ribosomal RNA small subunit methyltransferase G (228 aa).

S-adenosyl-L-methionine is bound by residues G89, L94, 140–141, and R159; that span reads VE.

This sequence belongs to the methyltransferase superfamily. RNA methyltransferase RsmG family.

The protein localises to the cytoplasm. It carries out the reaction guanosine(527) in 16S rRNA + S-adenosyl-L-methionine = N(7)-methylguanosine(527) in 16S rRNA + S-adenosyl-L-homocysteine. In terms of biological role, specifically methylates the N7 position of guanine in position 527 of 16S rRNA. The chain is Ribosomal RNA small subunit methyltransferase G from Burkholderia cenocepacia (strain ATCC BAA-245 / DSM 16553 / LMG 16656 / NCTC 13227 / J2315 / CF5610) (Burkholderia cepacia (strain J2315)).